Here is a 624-residue protein sequence, read N- to C-terminus: Kelch-like ECH-associated protein 1 (624 aa).

The residue at position 38 (C38) is an S-(2-succinyl)cysteine. A BTB domain is found at 77–149 (CDVTLQVKYQ…AYTASISMGE (73 aa)). R135 participates in a covalent cross-link: N5-[4-(S-L-cysteinyl)-5-methyl-1H-imidazol-2-yl]-L-ornithine (Arg-Cys) (interchain with C-151 in KEAP1). C151 and C241 each carry S-(2-succinyl)cysteine. An S-(2,3-dicarboxypropyl)cysteine; alternate modification is found at C151. C151 bears the S-nitrosocysteine; alternate mark. C151 is covalently cross-linked (N5-[4-(S-L-cysteinyl)-5-methyl-1H-imidazol-2-yl]-L-ornithine (Cys-Arg) (interchain with R-135 in KEAP1)). In terms of domain architecture, BACK spans 184 to 286 (AIGIANFAEQ…TPNFLQMQLQ (103 aa)). 2 positions are modified to S-(2,3-dicarboxypropyl)cysteine: C257 and C273. S-(2-succinyl)cysteine is present on residues C288 and C319. S-(2,3-dicarboxypropyl)cysteine; alternate is present on C288. Kelch repeat units lie at residues 327 to 372 (LIYT…VVGG), 373 to 423 (LLYA…VIDG), 424 to 470 (HIYA…VLNR), 471 to 517 (LLYA…VLHN), 518 to 564 (CIYA…VHQG), and 565 to 611 (RIYV…VTME). Position 434 is an S-cGMP-cysteine (C434). At C613 the chain carries S-(2-succinyl)cysteine.

Belongs to the KEAP1 family. As to quaternary structure, component of the BCR(KEAP1) E3 ubiquitin ligase complex, at least composed of 2 molecules of CUL3, 2 molecules of KEAP1, and RBX1. Interacts with NFE2L2/NRF2; the interaction is direct. Forms a ternary complex with NFE2L2/NRF2 and PGAM5. Interacts with (phosphorylated) SQSTM1/p62; the interaction is direct and inactivates the BCR(KEAP1) complex by sequestering it in inclusion bodies, promoting its degradation. Interacts with NFE2L1. Interacts with BPTF and PTMA. Interacts with MAP1LC3B. Interacts indirectly with ENC1. Interacts with SESN1 and SESN2. Interacts with HSP90AA1 and HSP90AB1. Interacts with PGCKA1; this interaction prevents the ubiquitination of KEAP1 by TRIM25, thus protecting KEAP1 from degradation. Post-translationally, non-enzymatic covalent modifications of reactive cysteines by electrophile metabolites inactivate the BCR(KEAP1) complex. Accumulation of fumarate promotes the formation of cysteine S-succination (S-(2-succinyl)cysteine), leading to inactivate the BCR(KEAP1) complex and promote NFE2L2/NRF2 nuclear accumulation and activation. Nitric oxide-dependent 8-Nitro-cGMP formation promotes cysteine guanylation (S-cGMP-cysteine), leading to NFE2L2/NRF2 nuclear accumulation and activation. Itaconate, an anti-inflammatory metabolite generated in response to lipopolysaccharide, alkylates cysteines, activating NFE2L2/NRF2. Methylglyoxal, a reactive metabolite that accumulates when the glycolytic enzyme PGK1 is inhibited, promotes formation of a methylimidazole cross-link between proximal Cys-151 and Arg-135 on another KEAP1 molecule, resulting in an inactive dimer that inactivates the BCR(KEAP1) complex. In terms of processing, degraded via a proteasomal-independent process during selective autophagy: interaction with phosphorylated SQSTM1/p62 sequesters KEAP1 in inclusion bodies, leading to its degradation. Auto-ubiquitinated by the BCR(KEAP1) complex. Quinone-induced oxidative stress, but not sulforaphane, increases its ubiquitination. Ubiquitination and subsequent degradation is most pronounced following prolonged exposure of cells to oxidative stress, particularly in glutathione-deficient cells that are highly susceptible to oxidative stress. Deubiquitinated by USP25; leading to stabilization. Ubiquitinated by TRIM25; leading to degradation upon ER stress.

The protein resides in the cytoplasm. Its subcellular location is the nucleus. It functions in the pathway protein modification; protein ubiquitination. Ubiquitin ligase activity of the BCR(KEAP1) complex is inhibited by oxidative stress and electrophile metabolites such as sulforaphane. Electrophile metabolites react with reactive cysteine residues in KEAP1 and trigger non-enzymatic covalent modifications of these cysteine residues, leading to inactivate the ubiquitin ligase activity of the BCR(KEAP1) complex. Selective autophagy also inactivates the BCR(KEAP1) complex via interaction between KEAP1 and SQSTM1/p62, which sequesters the complex in inclusion bodies and promotes its degradation. Functionally, substrate-specific adapter of a BCR (BTB-CUL3-RBX1) E3 ubiquitin ligase complex that regulates the response to oxidative stress by targeting NFE2L2/NRF2 for ubiquitination. KEAP1 acts as a key sensor of oxidative and electrophilic stress: in normal conditions, the BCR(KEAP1) complex mediates ubiquitination and degradation of NFE2L2/NRF2, a transcription factor regulating expression of many cytoprotective genes. In response to oxidative stress, different electrophile metabolites trigger non-enzymatic covalent modifications of highly reactive cysteine residues in KEAP1, leading to inactivate the ubiquitin ligase activity of the BCR(KEAP1) complex, promoting NFE2L2/NRF2 nuclear accumulation and expression of phase II detoxifying enzymes. In response to selective autophagy, KEAP1 is sequestered in inclusion bodies following its interaction with SQSTM1/p62, leading to inactivation of the BCR(KEAP1) complex and activation of NFE2L2/NRF2. The BCR(KEAP1) complex also mediates ubiquitination of SQSTM1/p62, increasing SQSTM1/p62 sequestering activity and degradation. The BCR(KEAP1) complex also targets BPTF and PGAM5 for ubiquitination and degradation by the proteasome. This chain is Kelch-like ECH-associated protein 1, found in Pongo abelii (Sumatran orangutan).